A 181-amino-acid polypeptide reads, in one-letter code: Adenine phosphoribosyltransferase (181 aa).

This sequence belongs to the purine/pyrimidine phosphoribosyltransferase family. In terms of assembly, homodimer.

Its subcellular location is the cytoplasm. It carries out the reaction AMP + diphosphate = 5-phospho-alpha-D-ribose 1-diphosphate + adenine. It functions in the pathway purine metabolism; AMP biosynthesis via salvage pathway; AMP from adenine: step 1/1. In terms of biological role, catalyzes a salvage reaction resulting in the formation of AMP, that is energically less costly than de novo synthesis. This chain is Adenine phosphoribosyltransferase, found in Brucella suis (strain ATCC 23445 / NCTC 10510).